A 153-amino-acid chain; its full sequence is MSESVDSVELFTDGACKGNPGPGGWGALLVCKGVEKELWGGEANTTNNRMELLGAIRGLEALKRPCEVLLVTDSQYVMKGINEWMANWKKRGWKTAAKEPVKNADLWKALDEQVNRHKVTWKWVRGHIGHHGNERADQLANRGVDEVRGYKQS.

Residues 4-145 enclose the RNase H type-1 domain; that stretch reads SVDSVELFTD…ADQLANRGVD (142 aa). Mg(2+) contacts are provided by aspartate 13, glutamate 51, aspartate 73, and aspartate 137.

It belongs to the RNase H family. As to quaternary structure, monomer. The cofactor is Mg(2+).

The protein localises to the cytoplasm. The enzyme catalyses Endonucleolytic cleavage to 5'-phosphomonoester.. Endonuclease that specifically degrades the RNA of RNA-DNA hybrids. This Pseudomonas fluorescens (strain Pf0-1) protein is Ribonuclease H.